Here is a 510-residue protein sequence, read N- to C-terminus: NAD(P)H-quinone oxidoreductase subunit 2 B, chloroplastic (510 aa).

The next 13 helical transmembrane spans lie at 24 to 44, 59 to 79, 99 to 119, 124 to 144, 149 to 169, 184 to 204, 229 to 249, 262 to 284, 295 to 315, 323 to 343, 354 to 374, 395 to 415, and 418 to 438; these read LLLF…GLIL, WFYF…LFRW, IFQF…VEYI, MAIT…MFLC, LITI…LSGY, LLMG…LYGL, ISIA…LAPF, TPVV…TRIF, WHLL…LIAI, MLAY…IVGD, YMLF…LFGL, ALSL…AGFF, and LHLF…IGLL.

This sequence belongs to the complex I subunit 2 family. NDH is composed of at least 16 different subunits, 5 of which are encoded in the nucleus.

The protein localises to the plastid. Its subcellular location is the chloroplast thylakoid membrane. The catalysed reaction is a plastoquinone + NADH + (n+1) H(+)(in) = a plastoquinol + NAD(+) + n H(+)(out). It catalyses the reaction a plastoquinone + NADPH + (n+1) H(+)(in) = a plastoquinol + NADP(+) + n H(+)(out). Its function is as follows. NDH shuttles electrons from NAD(P)H:plastoquinone, via FMN and iron-sulfur (Fe-S) centers, to quinones in the photosynthetic chain and possibly in a chloroplast respiratory chain. The immediate electron acceptor for the enzyme in this species is believed to be plastoquinone. Couples the redox reaction to proton translocation, and thus conserves the redox energy in a proton gradient. The polypeptide is NAD(P)H-quinone oxidoreductase subunit 2 B, chloroplastic (Lemna minor (Common duckweed)).